Consider the following 75-residue polypeptide: DNA-directed RNA polymerase subunit epsilon (75 aa).

This sequence belongs to the RNA polymerase subunit epsilon family. In terms of assembly, RNAP is composed of a core of 2 alpha, a beta and a beta' subunit. The core is associated with a delta subunit, and at least one of epsilon or omega. When a sigma factor is associated with the core the holoenzyme is formed, which can initiate transcription.

The enzyme catalyses RNA(n) + a ribonucleoside 5'-triphosphate = RNA(n+1) + diphosphate. A non-essential component of RNA polymerase (RNAP). This Lactobacillus johnsonii (strain CNCM I-12250 / La1 / NCC 533) protein is DNA-directed RNA polymerase subunit epsilon.